A 98-amino-acid chain; its full sequence is Small ribosomal subunit protein bS20 (98 aa).

Residues Met1 to Pro12 are compositionally biased toward basic residues. The disordered stretch occupies residues Met1–Arg31.

It belongs to the bacterial ribosomal protein bS20 family.

In terms of biological role, binds directly to 16S ribosomal RNA. This Chlamydia trachomatis serovar L2 (strain ATCC VR-902B / DSM 19102 / 434/Bu) protein is Small ribosomal subunit protein bS20.